We begin with the raw amino-acid sequence, 652 residues long: Acetyl-coenzyme A synthetase (652 aa).

CoA contacts are provided by residues 189–192 (RGGK), Thr-311, and Asn-335. Residues 387–389 (GEP), 411–416 (DTWWQT), Asp-500, and Arg-515 each bind ATP. Ser-523 is a CoA binding site. Arg-526 contacts ATP. Mg(2+)-binding residues include Val-537, His-539, and Val-542. Arg-584 provides a ligand contact to CoA. Position 609 is an N6-acetyllysine (Lys-609).

It belongs to the ATP-dependent AMP-binding enzyme family. The cofactor is Mg(2+). In terms of processing, acetylated. Deacetylation by the SIR2-homolog deacetylase activates the enzyme.

The enzyme catalyses acetate + ATP + CoA = acetyl-CoA + AMP + diphosphate. Its function is as follows. Catalyzes the conversion of acetate into acetyl-CoA (AcCoA), an essential intermediate at the junction of anabolic and catabolic pathways. AcsA undergoes a two-step reaction. In the first half reaction, AcsA combines acetate with ATP to form acetyl-adenylate (AcAMP) intermediate. In the second half reaction, it can then transfer the acetyl group from AcAMP to the sulfhydryl group of CoA, forming the product AcCoA. The sequence is that of Acetyl-coenzyme A synthetase from Rhizobium rhizogenes (strain K84 / ATCC BAA-868) (Agrobacterium radiobacter).